The following is a 390-amino-acid chain: MAVGIENTIEEARFVEQARNFDIQRVIVKIGSSLLTNNGRGLDRTAIYEWAKQIAKLHKQGIEVLLVSSGAVAEGVVRMNLEERPKKLAALQACASIGQMGLIETWWSALIQHGIQSSQLLLTHDDLSNRSRYLNTTGALTQLLEWRVLPVINENDTITIDEIKFGDNDTLGAMAAAMVNADLYIILTDQEGVFTDNPRDNPNAKMIRQERAMADYLFDIAGDGGKLGRGGMLTKIRAGRLAAMGGCPTVIVSGAIDDVITRVVSGEAVGTLLTTNDQDKIIARKQWLAAHLRMSGSLIVDAGAAKAVVEHQKSLLPVGVSEVRGDFDEGDVVEIVHQDTGERIAVGQVNFSSRDACRVARERTEQFDRILGNNEERVVMVHRDNLALTM.

ATP is bound at residue K29. Residues S69, D156, and N168 each coordinate substrate. Position 188 to 189 (188 to 189) interacts with ATP; it reads TD. The region spanning 295–374 is the PUA domain; sequence SGSLIVDAGA…EQFDRILGNN (80 aa).

The protein belongs to the glutamate 5-kinase family.

The protein localises to the cytoplasm. The catalysed reaction is L-glutamate + ATP = L-glutamyl 5-phosphate + ADP. It functions in the pathway amino-acid biosynthesis; L-proline biosynthesis; L-glutamate 5-semialdehyde from L-glutamate: step 1/2. Functionally, catalyzes the transfer of a phosphate group to glutamate to form L-glutamate 5-phosphate. The sequence is that of Glutamate 5-kinase from Psychrobacter arcticus (strain DSM 17307 / VKM B-2377 / 273-4).